The primary structure comprises 372 residues: MLLWLFEHLSGYNSSFQVIRYLTLRSLLSILTSLAIGLMLGPVMIRKLQALKYGQAVSSFAPENHAKKMGTPTMGGVLILMSIGISTLLWADLSNPYVWIVLGVMVVFGAVGWADDWIKIRYKDNAGLPARKKFFWTSVASLGAGISLYVIAQNQPNPIHTANMLDLLIPFFKNLSIPLSAVPLGIAFIIFTYLVINGASNAVNLTDGLDGLAIMPIVMVAAGLGVFAYLAGDIRFANYLHIPYVKYTSELVVICSAMVGAGLAFLWYNAHPAQIFMGDVGALALGAMLGTIAVMVRQEIVFAIMGGVFVMEAISVFLQIGSLRMRNKRVFLMAPLHHHYEKQGWKETQVVTRFWIITIMLVVLGLMTLKLR.

The next 10 helical transmembrane spans lie at 25-45 (RSLLSILTSLAIGLMLGPVMI), 73-93 (TMGGVLILMSIGISTLLWADL), 98-118 (VWIVLGVMVVFGAVGWADDWI), 134-154 (FFWTSVASLGAGISLYVIAQN), 176-196 (SIPLSAVPLGIAFIIFTYLVI), 211-231 (GLAIMPIVMVAAGLGVFAYLA), 251-271 (LVVICSAMVGAGLAFLWYNAH), 275-295 (IFMGDVGALALGAMLGTIAVM), 300-320 (IVFAIMGGVFVMEAISVFLQI), and 349-369 (QVVTRFWIITIMLVVLGLMTL).

It belongs to the glycosyltransferase 4 family. MraY subfamily. Requires Mg(2+) as cofactor.

The protein resides in the cell inner membrane. The catalysed reaction is UDP-N-acetyl-alpha-D-muramoyl-L-alanyl-gamma-D-glutamyl-meso-2,6-diaminopimeloyl-D-alanyl-D-alanine + di-trans,octa-cis-undecaprenyl phosphate = di-trans,octa-cis-undecaprenyl diphospho-N-acetyl-alpha-D-muramoyl-L-alanyl-D-glutamyl-meso-2,6-diaminopimeloyl-D-alanyl-D-alanine + UMP. It functions in the pathway cell wall biogenesis; peptidoglycan biosynthesis. Its function is as follows. Catalyzes the initial step of the lipid cycle reactions in the biosynthesis of the cell wall peptidoglycan: transfers peptidoglycan precursor phospho-MurNAc-pentapeptide from UDP-MurNAc-pentapeptide onto the lipid carrier undecaprenyl phosphate, yielding undecaprenyl-pyrophosphoryl-MurNAc-pentapeptide, known as lipid I. This chain is Phospho-N-acetylmuramoyl-pentapeptide-transferase, found in Acinetobacter baylyi (strain ATCC 33305 / BD413 / ADP1).